A 751-amino-acid chain; its full sequence is Lanosterol synthase erg7A (751 aa).

Positions 1–22 are disordered; that stretch reads MTGGPIASWRTAAQGHLTPDEN. Residues 147–189 form a PFTB 1 repeat; that stretch reads ATEIKRYLFARQHPEDGGWGLHIEAHSSVFGTCMNYVALRLIG. Catalysis depends on aspartate 481, which acts as the Proton donor. PFTB repeat units follow at residues 508 to 553, 585 to 625, and 634 to 675; these read LKDS…MIGY, KDKA…ASVG, and ARRG…VQTA.

It belongs to the terpene cyclase/mutase family.

Its subcellular location is the lipid droplet. The protein resides in the endoplasmic reticulum membrane. The catalysed reaction is (S)-2,3-epoxysqualene = lanosterol. Its pathway is steroid metabolism; ergosterol biosynthesis. Its function is as follows. Lanosterol synthase; part of the third module of ergosterol biosynthesis pathway that includes the late steps of the pathway. ERG7A and ERG7B catalyze the cyclization of (S)-2,3 oxidosqualene to lanosterol, a reaction that forms the sterol core. The third module or late pathway involves the ergosterol synthesis itself through consecutive reactions that mainly occur in the endoplasmic reticulum (ER) membrane. Firstly, the squalene synthase erg9 catalyzes the condensation of 2 farnesyl pyrophosphate moieties to form squalene, which is the precursor of all steroids. Squalene synthase is crucial for balancing the incorporation of farnesyl diphosphate (FPP) into sterol and nonsterol isoprene synthesis. Secondly, squalene is converted into lanosterol by the consecutive action of the squalene epoxidase erg1 and the lanosterol synthase erg7. Then, the delta(24)-sterol C-methyltransferase erg6 methylates lanosterol at C-24 to produce eburicol. Eburicol is the substrate of the sterol 14-alpha demethylase encoded by cyp51A and cyp51B, to yield 4,4,24-trimethyl ergosta-8,14,24(28)-trienol. The C-14 reductase erg24 then reduces the C14=C15 double bond which leads to 4,4-dimethylfecosterol. A sequence of further demethylations at C-4, involving the C-4 demethylation complex containing the C-4 methylsterol oxidases erg25A or erg25B, the sterol-4-alpha-carboxylate 3-dehydrogenase erg26 and the 3-keto-steroid reductase erg27, leads to the production of fecosterol via 4-methylfecosterol. The C-8 sterol isomerase erg2 then catalyzes the reaction which results in unsaturation at C-7 in the B ring of sterols and thus converts fecosterol to episterol. The sterol-C5-desaturase erg3B then catalyzes the introduction of a C-5 double bond in the B ring to produce 5-dehydroepisterol. The 2 other sterol-C5-desaturases, erg3A and erg3C, seem to be less important in ergosterol biosynthesis. The C-22 sterol desaturase erg5 further converts 5-dehydroepisterol into ergosta-5,7,22,24(28)-tetraen-3beta-ol by forming the C-22(23) double bond in the sterol side chain. Finally, ergosta-5,7,22,24(28)-tetraen-3beta-ol is substrate of the C-24(28) sterol reductases erg4A and erg4B to produce ergosterol. Possible alternative sterol biosynthetic pathways might exist from fecosterol to ergosterol, depending on the activities of the erg3 isoforms. The polypeptide is Lanosterol synthase erg7A (Aspergillus fumigatus (strain ATCC MYA-4609 / CBS 101355 / FGSC A1100 / Af293) (Neosartorya fumigata)).